An 838-amino-acid chain; its full sequence is G-protein coupled receptor-associated sorting protein 2 (838 aa).

Disordered stretches follow at residues 1 to 121 (MTGA…PGAR), 218 to 293 (ASNE…NPFS), and 531 to 552 (LELS…PSPE). Over residues 13-31 (KPEKKAGEEVVAGPEREND) the composition is skewed to basic and acidic residues. Residues 220 to 235 (NESGFWSADETSTASS) show a composition bias toward polar residues. Over residues 255–271 (RSRHRAKHQTNPRSRPR) the composition is skewed to basic residues. Phosphoserine is present on residues S282 and S284. A compositionally biased stretch (polar residues) spans 542-552 (SLLQPDQPSPE).

Belongs to the GPRASP family. Interacts with cytoplasmic tails of a variety of G protein-coupled receptors such as muscarinic acetylcholine receptor M1/CHRM1 and calcitonin receptor/CALCR.

Its function is as follows. May play a role in regulation of a variety of G-protein coupled receptors. This is G-protein coupled receptor-associated sorting protein 2 (GPRASP2) from Pongo abelii (Sumatran orangutan).